A 59-amino-acid chain; its full sequence is Large ribosomal subunit protein uL30 (59 aa).

This sequence belongs to the universal ribosomal protein uL30 family. As to quaternary structure, part of the 50S ribosomal subunit.

The chain is Large ribosomal subunit protein uL30 from Aeromonas hydrophila subsp. hydrophila (strain ATCC 7966 / DSM 30187 / BCRC 13018 / CCUG 14551 / JCM 1027 / KCTC 2358 / NCIMB 9240 / NCTC 8049).